Here is a 413-residue protein sequence, read N- to C-terminus: Serine hydroxymethyltransferase (413 aa).

(6S)-5,6,7,8-tetrahydrofolate-binding positions include L117 and 121-123 (GHL). The residue at position 226 (K226) is an N6-(pyridoxal phosphate)lysine. (6S)-5,6,7,8-tetrahydrofolate is bound at residue 349–351 (SPF).

This sequence belongs to the SHMT family. In terms of assembly, homodimer. Pyridoxal 5'-phosphate is required as a cofactor.

The protein localises to the cytoplasm. It catalyses the reaction (6R)-5,10-methylene-5,6,7,8-tetrahydrofolate + glycine + H2O = (6S)-5,6,7,8-tetrahydrofolate + L-serine. Its pathway is one-carbon metabolism; tetrahydrofolate interconversion. The protein operates within amino-acid biosynthesis; glycine biosynthesis; glycine from L-serine: step 1/1. Its function is as follows. Catalyzes the reversible interconversion of serine and glycine with tetrahydrofolate (THF) serving as the one-carbon carrier. This reaction serves as the major source of one-carbon groups required for the biosynthesis of purines, thymidylate, methionine, and other important biomolecules. Also exhibits THF-independent aldolase activity toward beta-hydroxyamino acids, producing glycine and aldehydes, via a retro-aldol mechanism. This Listeria monocytogenes serotype 4b (strain F2365) protein is Serine hydroxymethyltransferase.